Consider the following 507-residue polypeptide: ATP synthase subunit alpha, mitochondrial (507 aa).

171–178 (GDRQTGKT) is a binding site for ATP.

Belongs to the ATPase alpha/beta chains family. As to quaternary structure, F-type ATPases have 2 components, CF(1) - the catalytic core - and CF(0) - the membrane proton channel. CF(1) has five subunits: alpha(3), beta(3), gamma(1), delta(1), epsilon(1). CF(0) has three main subunits: a, b and c.

It is found in the mitochondrion. The protein resides in the mitochondrion inner membrane. Functionally, mitochondrial membrane ATP synthase (F(1)F(0) ATP synthase or Complex V) produces ATP from ADP in the presence of a proton gradient across the membrane which is generated by electron transport complexes of the respiratory chain. F-type ATPases consist of two structural domains, F(1) - containing the extramembraneous catalytic core, and F(0) - containing the membrane proton channel, linked together by a central stalk and a peripheral stalk. During catalysis, ATP synthesis in the catalytic domain of F(1) is coupled via a rotary mechanism of the central stalk subunits to proton translocation. Subunits alpha and beta form the catalytic core in F(1). Rotation of the central stalk against the surrounding alpha(3)beta(3) subunits leads to hydrolysis of ATP in three separate catalytic sites on the beta subunits. Subunit alpha does not bear the catalytic high-affinity ATP-binding sites. The polypeptide is ATP synthase subunit alpha, mitochondrial (ATPA) (Pisum sativum (Garden pea)).